Consider the following 326-residue polypeptide: Bifunctional pinoresinol-lariciresinol reductase (326 aa).

NADP(+) contacts are provided by residues 25 to 31, Arg50, and Lys59; that span reads GGTGYLG. Lys153 functions as the Proton acceptor in the catalytic mechanism. NADP(+) is bound at residue Arg157. His285 contributes to the substrate binding site.

Belongs to the NmrA-type oxidoreductase family. Isoflavone reductase subfamily. Dimer.

It carries out the reaction (+)-lariciresinol + NADP(+) = (+)-pinoresinol + NADPH + H(+). The catalysed reaction is (-)-secoisolariciresinol + NADP(+) = (+)-lariciresinol + NADPH + H(+). In terms of biological role, reductase involved in lignan biosynthesis. Catalyzes the enantioselective conversion of (+)-pinoresinol into (+)-lariciresinol and of (+)-lariciresinol into (-)-secoisolariciresinol. Abstracts the 4R-hydride from the NADPH cofactor during catalysis. This chain is Bifunctional pinoresinol-lariciresinol reductase (PLR1), found in Linum album (Flax).